We begin with the raw amino-acid sequence, 267 residues long: Tryptophan 2,3-dioxygenase (267 aa).

Substrate-binding positions include 44–48 (FITIH) and Arg-114. Residue His-225 participates in heme binding. Position 239 (Thr-239) interacts with substrate.

Belongs to the tryptophan 2,3-dioxygenase family. As to quaternary structure, homotetramer. It depends on heme as a cofactor.

It catalyses the reaction L-tryptophan + O2 = N-formyl-L-kynurenine. It participates in amino-acid degradation; L-tryptophan degradation via kynurenine pathway; L-kynurenine from L-tryptophan: step 1/2. Heme-dependent dioxygenase that catalyzes the oxidative cleavage of the L-tryptophan (L-Trp) pyrrole ring and converts L-tryptophan to N-formyl-L-kynurenine. Catalyzes the oxidative cleavage of the indole moiety. The sequence is that of Tryptophan 2,3-dioxygenase from Nocardioides sp. (strain ATCC BAA-499 / JS614).